Reading from the N-terminus, the 269-residue chain is 4-hydroxy-tetrahydrodipicolinate reductase (269 aa).

NAD(+) contacts are provided by residues 12–17, 102–104, and 126–129; these read GGSGRM, GTT, and SPNM. His159 (proton donor/acceptor) is an active-site residue. His160 contributes to the (S)-2,3,4,5-tetrahydrodipicolinate binding site. The active-site Proton donor is the Lys163. (S)-2,3,4,5-tetrahydrodipicolinate is bound at residue 169 to 170; it reads GT.

This sequence belongs to the DapB family.

It localises to the cytoplasm. It carries out the reaction (S)-2,3,4,5-tetrahydrodipicolinate + NAD(+) + H2O = (2S,4S)-4-hydroxy-2,3,4,5-tetrahydrodipicolinate + NADH + H(+). The enzyme catalyses (S)-2,3,4,5-tetrahydrodipicolinate + NADP(+) + H2O = (2S,4S)-4-hydroxy-2,3,4,5-tetrahydrodipicolinate + NADPH + H(+). It participates in amino-acid biosynthesis; L-lysine biosynthesis via DAP pathway; (S)-tetrahydrodipicolinate from L-aspartate: step 4/4. Functionally, catalyzes the conversion of 4-hydroxy-tetrahydrodipicolinate (HTPA) to tetrahydrodipicolinate. The protein is 4-hydroxy-tetrahydrodipicolinate reductase of Leptospira borgpetersenii serovar Hardjo-bovis (strain JB197).